Reading from the N-terminus, the 266-residue chain is Non-structural maintenance of chromosomes element 1 homolog (266 aa).

The interval 1 to 102 (MQGSTRRAGA…SVSKMATDFA (102 aa)) is interaction with NSMCE3. The segment at 191–232 (CNICHGLLIQGQSCETCGIRMHLPCVAKYFQSIPEPHCPHCN) adopts an RING-type; atypical zinc-finger fold. Residues 246-266 (EKEREAGISKSSRKSLRTRQH) form a disordered region. Positions 256–266 (SSRKSLRTRQH) are enriched in basic residues.

This sequence belongs to the NSE1 family. Component of the SMC5-SMC6 complex which consists at least of SMC5, SMC6, NSMCE2, NSMCE1, NSMCE4A or EID3 and NSMCE3. NSMCE1, NSMCE4A or EID3 and NSMCE3 probably form a subcomplex that bridges the head domains of the SMC5-SMC6 heterodimer. Interacts with NSMCE3. Ubiquitinated.

The protein resides in the nucleus. It is found in the chromosome. The protein localises to the telomere. It carries out the reaction S-ubiquitinyl-[E2 ubiquitin-conjugating enzyme]-L-cysteine + [acceptor protein]-L-lysine = [E2 ubiquitin-conjugating enzyme]-L-cysteine + N(6)-ubiquitinyl-[acceptor protein]-L-lysine.. Its function is as follows. RING-type zinc finger-containing E3 ubiquitin ligase that assembles with melanoma antigen protein (MAGE) to catalyze the direct transfer of ubiquitin from E2 ubiquitin-conjugating enzyme to a specific substrate. Within MAGE-RING ubiquitin ligase complex, MAGE stimulates and specifies ubiquitin ligase activity likely through recruitment and/or stabilization of the E2 ubiquitin-conjugating enzyme at the E3:substrate complex. Involved in maintenance of genome integrity, DNA damage response and DNA repair. NSMCE3/MAGEG1 and NSMCE1 ubiquitin ligase are components of SMC5-SMC6 complex and may positively regulate homologous recombination-mediated DNA repair. This Mus musculus (Mouse) protein is Non-structural maintenance of chromosomes element 1 homolog (Nsmce1).